We begin with the raw amino-acid sequence, 500 residues long: Lysine--tRNA ligase (500 aa).

Positions 409 and 416 each coordinate Mg(2+).

This sequence belongs to the class-II aminoacyl-tRNA synthetase family. As to quaternary structure, homodimer. Mg(2+) is required as a cofactor.

It is found in the cytoplasm. It catalyses the reaction tRNA(Lys) + L-lysine + ATP = L-lysyl-tRNA(Lys) + AMP + diphosphate. The polypeptide is Lysine--tRNA ligase (Lysinibacillus sphaericus (strain C3-41)).